We begin with the raw amino-acid sequence, 96 residues long: Large ribosomal subunit protein bL27 (96 aa).

Residues 1–9 (MLRLDLQFF) constitute a propeptide that is removed on maturation. Positions 1–36 (MLRLDLQFFSTKKGQGSSKNGRDSESKRLGSKRADG) are disordered. Residues 8–19 (FFSTKKGQGSSK) are compositionally biased toward polar residues. Residues 20 to 35 (NGRDSESKRLGSKRAD) are compositionally biased toward basic and acidic residues.

It belongs to the bacterial ribosomal protein bL27 family. Post-translationally, the N-terminus is cleaved by ribosomal processing cysteine protease Prp.

The chain is Large ribosomal subunit protein bL27 from Oceanobacillus iheyensis (strain DSM 14371 / CIP 107618 / JCM 11309 / KCTC 3954 / HTE831).